A 175-amino-acid chain; its full sequence is Large ribosomal subunit protein uL6 (175 aa).

Belongs to the universal ribosomal protein uL6 family. Part of the 50S ribosomal subunit.

Its function is as follows. This protein binds to the 23S rRNA, and is important in its secondary structure. It is located near the subunit interface in the base of the L7/L12 stalk, and near the tRNA binding site of the peptidyltransferase center. This Xanthomonas axonopodis pv. citri (strain 306) protein is Large ribosomal subunit protein uL6.